The sequence spans 256 residues: Thiazole synthase (256 aa).

The active-site Schiff-base intermediate with DXP is lysine 95. 1-deoxy-D-xylulose 5-phosphate-binding positions include glycine 156, 182–183 (AG), and 204–205 (NT).

This sequence belongs to the ThiG family. In terms of assembly, homotetramer. Forms heterodimers with either ThiH or ThiS.

Its subcellular location is the cytoplasm. It carries out the reaction [ThiS sulfur-carrier protein]-C-terminal-Gly-aminoethanethioate + 2-iminoacetate + 1-deoxy-D-xylulose 5-phosphate = [ThiS sulfur-carrier protein]-C-terminal Gly-Gly + 2-[(2R,5Z)-2-carboxy-4-methylthiazol-5(2H)-ylidene]ethyl phosphate + 2 H2O + H(+). Its pathway is cofactor biosynthesis; thiamine diphosphate biosynthesis. Its function is as follows. Catalyzes the rearrangement of 1-deoxy-D-xylulose 5-phosphate (DXP) to produce the thiazole phosphate moiety of thiamine. Sulfur is provided by the thiocarboxylate moiety of the carrier protein ThiS. In vitro, sulfur can be provided by H(2)S. This is Thiazole synthase from Salmonella typhi.